A 270-amino-acid polypeptide reads, in one-letter code: 4-hydroxy-tetrahydrodipicolinate reductase (270 aa).

NAD(+) is bound by residues 11–16 (GASGRM) and Glu37. Position 38 (Arg38) interacts with NADP(+). Residues 101 to 103 (GTT) and 125 to 128 (APNM) contribute to the NAD(+) site. His158 (proton donor/acceptor) is an active-site residue. A (S)-2,3,4,5-tetrahydrodipicolinate-binding site is contributed by His159. The active-site Proton donor is Lys162. 168 to 169 (GT) is a (S)-2,3,4,5-tetrahydrodipicolinate binding site.

This sequence belongs to the DapB family.

Its subcellular location is the cytoplasm. The catalysed reaction is (S)-2,3,4,5-tetrahydrodipicolinate + NAD(+) + H2O = (2S,4S)-4-hydroxy-2,3,4,5-tetrahydrodipicolinate + NADH + H(+). It carries out the reaction (S)-2,3,4,5-tetrahydrodipicolinate + NADP(+) + H2O = (2S,4S)-4-hydroxy-2,3,4,5-tetrahydrodipicolinate + NADPH + H(+). Its pathway is amino-acid biosynthesis; L-lysine biosynthesis via DAP pathway; (S)-tetrahydrodipicolinate from L-aspartate: step 4/4. Catalyzes the conversion of 4-hydroxy-tetrahydrodipicolinate (HTPA) to tetrahydrodipicolinate. The sequence is that of 4-hydroxy-tetrahydrodipicolinate reductase from Shewanella amazonensis (strain ATCC BAA-1098 / SB2B).